We begin with the raw amino-acid sequence, 348 residues long: Trace amine-associated receptor 9 (348 aa).

Residues 1–33 (MTSDFSPEPPMELCYENVNGSCIKSSYAPWPRA) are Extracellular-facing. N19 is a glycosylation site (N-linked (GlcNAc...) asparagine). 2 cysteine pairs are disulfide-bonded: C22-C186 and C105-C190. Residues 34-58 (ILYGVLGLGALLAVFGNLLVIIAIL) form a helical membrane-spanning segment. The Cytoplasmic portion of the chain corresponds to 59–68 (HFKQLHTPTN). A helical membrane pass occupies residues 69-90 (FLVASLACADFLVGVTVMPFST). The Extracellular portion of the chain corresponds to 91 to 105 (VRSVESCWYFGESYC). A helical membrane pass occupies residues 106–128 (KFHTCFDTSFCFASLFHLCCISI). Positions 112 and 113 each coordinate spermidine. Residues 129 to 148 (DRYIAVTDPLTYPTKFTVSV) lie on the Cytoplasmic side of the membrane. A helical membrane pass occupies residues 149–170 (SGLCIALSWFFSVTYSFSIFYT). Residues 171 to 196 (GANEEGIEELVVALTCVGGCQAPLNQ) are Extracellular-facing. The interval 174 to 187 (EEGIEELVVALTCV) is extracellular Loop 2 (ECL2). A helical membrane pass occupies residues 197–218 (NWVLLCFLLFFLPTVVMVFLYG). The Cytoplasmic portion of the chain corresponds to 219–256 (RIFLVAKYQARKIEGTANQAQASSESYKERVAKRERKA). A helical transmembrane segment spans residues 257–280 (AKTLGIAMAAFLVSWLPYIIDAVI). Residues 281 to 293 (DAYMNFITPAYVY) are Extracellular-facing. Residues 294 to 314 (EILVWCVYYNSAMNPLIYAFF) traverse the membrane as a helical segment. Topologically, residues 315-348 (YPWFRKAIKLIVSGKVFRADSSTTNLFSEEAGAG) are cytoplasmic.

The protein belongs to the G-protein coupled receptor 1 family. In terms of tissue distribution, specifically expressed in neurons of the olfactory epithelium.

The protein resides in the cell membrane. Olfactory receptor specific for trace amines, such as triethylamine, N,N-dimethylcyclohexylamine (DMCHA), beta-phenylethylamine (beta-PEA), cadaverine (CAD) and polyamines such as spermine and spermidine. Trace amine compounds are enriched in animal body fluids and act on trace amine-associated receptors (TAARs) to elicit both intraspecific and interspecific innate behaviors. Trace amine-binding causes a conformation change that triggers signaling via G(s)-class of G alpha proteins (GNAL or GNAS). In mature olfactory sensory neurons, Taar9 is coupled with GNAL/G(olf)G alpha protein and mediates activation of adenylate cyclase activity to activate cAMP signaling and eventually transmit odorant signals to achieve membrane depolarization. In immature olfactory sensory neurons, Taar9 is coupled with GNAS/G(s) G alpha proteins. In Mus musculus (Mouse), this protein is Trace amine-associated receptor 9.